The chain runs to 225 residues: PKHD-type hydroxylase YbiX (225 aa).

In terms of domain architecture, Fe2OG dioxygenase spans 78-177 (TLSTPLFNRY…RVASFMWIQS (100 aa)). Residues H96, D98, and H158 each contribute to the Fe cation site. R168 is a 2-oxoglutarate binding site.

Requires Fe(2+) as cofactor. It depends on L-ascorbate as a cofactor.

In Shigella boydii serotype 4 (strain Sb227), this protein is PKHD-type hydroxylase YbiX.